The primary structure comprises 538 residues: Putative outer membrane porin BglH (538 aa).

Residues 1–25 (MFRRNLITSAILLMAPLAFSAQSLA) form the signal peptide. A disordered region spans residues 52-82 (KDEEKKKYTPATVNRSVSTNDQGYAANPFPT). A compositionally biased stretch (polar residues) spans 62–73 (ATVNRSVSTNDQ).

Belongs to the porin LamB (TC 1.B.3) family.

The protein localises to the cell outer membrane. In terms of biological role, may be a sugar porin with a broad carbohydrate specificity. In Escherichia coli O139:H28 (strain E24377A / ETEC), this protein is Putative outer membrane porin BglH (bglH).